We begin with the raw amino-acid sequence, 506 residues long: Histone acetyltransferase esa-1 (506 aa).

The disordered stretch occupies residues 1 to 24 (MSPPGGDATVGSDEKRQKGKATPD). Residues 26–78 (IKMGCIAMVMKEGQLRRAEILSIKDTKSGRQFYCNFDNFNKRLDEWVPAARID) enclose the Tudor-knot domain. The segment at 82–215 (DVEWPNPDKD…LRTSGSMTQN (134 aa)) is disordered. The segment covering 87-98 (NPDKDKQKDAKT) has biased composition (basic and acidic residues). Over residues 109-120 (QPSKKNNQKKAS) the composition is skewed to basic residues. Positions 167 to 178 (GGDKGVKRKADE) are enriched in basic and acidic residues. Positions 220-494 (SRIRNISKVE…IDPERIQWKP (275 aa)) constitute an MYST-type HAT domain. Residues 253-278 (IYICEFCLSYYGELKSFVRHRQKCTL) form a C2HC MYST-type zinc finger. The ESA1-RPD3 motif motif lies at 303–324 (RTWCRNLCLLSKMFLDHKTLYY). Lysine 320 carries the N6-acetyllysine; by autocatalysis modification. Acetyl-CoA is bound by residues 361–365 (ACILT) and 370–376 (QRKGYGR). Glutamate 396 serves as the catalytic Proton donor/acceptor. Acetyl-CoA is bound at residue serine 400.

The protein belongs to the MYST (SAS/MOZ) family. Component of the NuA4 histone acetyltransferase complex. Post-translationally, autoacetylation at Lys-320 is required for proper function.

It localises to the nucleus. Its subcellular location is the chromosome. The catalysed reaction is L-lysyl-[histone] + acetyl-CoA = N(6)-acetyl-L-lysyl-[histone] + CoA + H(+). It catalyses the reaction L-lysyl-[protein] + acetyl-CoA = N(6)-acetyl-L-lysyl-[protein] + CoA + H(+). The enzyme catalyses 2-hydroxyisobutanoyl-CoA + L-lysyl-[protein] = N(6)-(2-hydroxyisobutanoyl)-L-lysyl-[protein] + CoA + H(+). It carries out the reaction (2E)-butenoyl-CoA + L-lysyl-[protein] = N(6)-(2E)-butenoyl-L-lysyl-[protein] + CoA + H(+). Catalytic component of the NuA4 histone acetyltransferase (HAT) complex which is involved in epigenetic transcriptional activation of selected genes principally by acetylation of nucleosomal histones H4, H3, H2B, H2A and H2A variant H2A.Z. Acetylates histone H4 to form H4K5ac, H4K8ac, H4K12ac and H4K16ac, histone H3 to form H3K14ac, and histone H2A to form H2AK4ac and H2AK7ac. The NuA4 complex is involved in the DNA damage response and is required for chromosome segregation. The NuA4 complex plays a direct role in repair of DNA double-strand breaks (DSBs) through homologous recombination. Recruitment to promoters depends on H3K4me. Also acetylates non-histone proteins. In addition to protein acetyltransferase, can use different acyl-CoA substrates, such as 2-hydroxyisobutanoyl-CoA (2-hydroxyisobutyryl-CoA) or (2E)-butenoyl-CoA (crotonyl-CoA), and is able to mediate protein 2-hydroxyisobutyrylation and crotonylation, respectively. This is Histone acetyltransferase esa-1 (esa-1) from Neurospora crassa (strain ATCC 24698 / 74-OR23-1A / CBS 708.71 / DSM 1257 / FGSC 987).